We begin with the raw amino-acid sequence, 432 residues long: Protein RETICULATA, chloroplastic (432 aa).

Residues 1–47 (MAGCAMNLQFSSVVKVRNEISSFGICNRDFVFRDLAKAMKVPVLRIR) constitute a chloroplast transit peptide. A disordered region spans residues 109-140 (GNVGDGFNGSDGNGGGGGGGNGGEGDGEGEDY). The span at 111–132 (VGDGFNGSDGNGGGGGGGNGGE) shows a compositional bias: gly residues. 2 helical membrane passes run 249 to 269 (LYVA…GMLA) and 322 to 342 (IMYG…ANLI).

Belongs to the RETICULATA family. As to expression, highly expressed in the vasculature of developing leaf primordia, margins of fully expanded leaves, hydathodes of rosette of cauline leaves, basal region of the lamina, stipules, root tips, stamens and in the abscission zone of the funiculus.

The protein localises to the plastid. The protein resides in the chloroplast membrane. Its function is as follows. May play a role in leaf development. Required for leaf mesophyll cell division in the early stages of leaf organogenesis. Acts in a developmental pathway that involves PPT1/CUE1 but does not include ASE2/DOV1. This is Protein RETICULATA, chloroplastic from Arabidopsis thaliana (Mouse-ear cress).